The primary structure comprises 127 residues: Glycine cleavage system H protein (127 aa).

The region spanning 22-104 is the Lipoyl-binding domain; it reads EVVIGITHFA…YEGAWMVKVE (83 aa). At Lys-63 the chain carries N6-lipoyllysine.

This sequence belongs to the GcvH family. The glycine cleavage system is composed of four proteins: P, T, L and H. It depends on (R)-lipoate as a cofactor.

In terms of biological role, the glycine cleavage system catalyzes the degradation of glycine. The H protein shuttles the methylamine group of glycine from the P protein to the T protein. Functionally, is also involved in protein lipoylation via its role as an octanoyl/lipoyl carrier protein intermediate. The protein is Glycine cleavage system H protein of Bacillus cereus (strain B4264).